Reading from the N-terminus, the 352-residue chain is N-acetyl-gamma-glutamyl-phosphate reductase (352 aa).

Cys155 is a catalytic residue.

The protein belongs to the NAGSA dehydrogenase family. Type 1 subfamily.

The protein resides in the cytoplasm. The enzyme catalyses N-acetyl-L-glutamate 5-semialdehyde + phosphate + NADP(+) = N-acetyl-L-glutamyl 5-phosphate + NADPH + H(+). The protein operates within amino-acid biosynthesis; L-arginine biosynthesis; N(2)-acetyl-L-ornithine from L-glutamate: step 3/4. In terms of biological role, catalyzes the NADPH-dependent reduction of N-acetyl-5-glutamyl phosphate to yield N-acetyl-L-glutamate 5-semialdehyde. This chain is N-acetyl-gamma-glutamyl-phosphate reductase, found in Cyanothece sp. (strain PCC 7425 / ATCC 29141).